The following is a 151-amino-acid chain: RNA polymerase-binding transcription factor DksA (151 aa).

A coiled-coil region spans residues 34–54 (EAQLSHFKRILEAWRNQLRDE). Residues cysteine 114, cysteine 117, cysteine 135, and cysteine 138 each contribute to the Zn(2+) site. The dksA C4-type zinc-finger motif lies at 114 to 138 (CESCGVEIGIRRLEARPTADLCIDC).

This sequence belongs to the DksA family. In terms of assembly, interacts directly with the RNA polymerase.

It is found in the cytoplasm. Its function is as follows. Transcription factor that acts by binding directly to the RNA polymerase (RNAP). Required for negative regulation of rRNA expression and positive regulation of several amino acid biosynthesis promoters. Also required for regulation of fis expression. This Salmonella typhi protein is RNA polymerase-binding transcription factor DksA.